The primary structure comprises 67 residues: MAQGTVKWFNAEKGFGFISTENGQDVFAHFSAIQTSGFKTLEEGQKVAFDVEEGQRGPQAVNITKLA.

The 60-residue stretch at 4–63 (GTVKWFNAEKGFGFISTENGQDVFAHFSAIQTSGFKTLEEGQKVAFDVEEGQRGPQAVNI) folds into the CSD domain.

Homodimer.

The protein localises to the cytoplasm. This chain is Major cold shock protein (cspA), found in Streptococcus pyogenes serotype M6 (strain ATCC BAA-946 / MGAS10394).